The sequence spans 358 residues: Sulfate/thiosulfate import ATP-binding protein CysA 1 (358 aa).

Positions 3–237 (IQVENIRKAF…PASAFVYGFL (235 aa)) constitute an ABC transporter domain. 35 to 42 (GPSGCGKT) contacts ATP.

It belongs to the ABC transporter superfamily. Sulfate/tungstate importer (TC 3.A.1.6) family. The complex is composed of two ATP-binding proteins (CysA), two transmembrane proteins (CysT and CysW) and a solute-binding protein (CysP).

It localises to the cell inner membrane. The catalysed reaction is sulfate(out) + ATP + H2O = sulfate(in) + ADP + phosphate + H(+). It carries out the reaction thiosulfate(out) + ATP + H2O = thiosulfate(in) + ADP + phosphate + H(+). Functionally, part of the ABC transporter complex CysAWTP involved in sulfate/thiosulfate import. Responsible for energy coupling to the transport system. The protein is Sulfate/thiosulfate import ATP-binding protein CysA 1 of Chromobacterium violaceum (strain ATCC 12472 / DSM 30191 / JCM 1249 / CCUG 213 / NBRC 12614 / NCIMB 9131 / NCTC 9757 / MK).